The following is a 195-amino-acid chain: Probable GTP-binding protein EngB (195 aa).

The 172-residue stretch at 24–195 folds into the EngB-type G domain; it reads ELPEIALAGR…EAWDAILEKL (172 aa). Residues 32–39, 59–63, 77–80, 144–147, and 176–178 each bind GTP; these read GRSNVGKS, GKTQL, DVPG, TKAD, and FSS. Residues serine 39 and threonine 61 each coordinate Mg(2+).

The protein belongs to the TRAFAC class TrmE-Era-EngA-EngB-Septin-like GTPase superfamily. EngB GTPase family. Requires Mg(2+) as cofactor.

In terms of biological role, necessary for normal cell division and for the maintenance of normal septation. The polypeptide is Probable GTP-binding protein EngB (Streptococcus pneumoniae serotype 4 (strain ATCC BAA-334 / TIGR4)).